A 310-amino-acid polypeptide reads, in one-letter code: Olfactory receptor 10N1 (310 aa).

Residues methionine 1–threonine 23 are Extracellular-facing. N-linked (GlcNAc...) asparagine glycosylation is present at asparagine 3. Residues leucine 24–phenylalanine 44 traverse the membrane as a helical segment. Topologically, residues threonine 45 to threonine 55 are cytoplasmic. Residues proline 56 to cysteine 76 form a helical membrane-spanning segment. Residues proline 77–cysteine 95 lie on the Extracellular side of the membrane. A disulfide bond links cysteine 95 and cysteine 187. Residues alanine 96 to methionine 116 form a helical membrane-spanning segment. Over alanine 117–proline 136 the chain is Cytoplasmic. Residues glycine 137–leucine 157 form a helical membrane-spanning segment. The Extracellular portion of the chain corresponds to threonine 158–glycine 202. Residues phenylalanine 203 to isoleucine 223 form a helical membrane-spanning segment. At leucine 224 to serine 237 the chain is on the cytoplasmic side. A helical membrane pass occupies residues threonine 238–leucine 258. Residues glutamine 259–proline 264 lie on the Extracellular side of the membrane. Residues leucine 265 to isoleucine 285 traverse the membrane as a helical segment. Residues tyrosine 286–lysine 310 are Cytoplasmic-facing.

It belongs to the G-protein coupled receptor 1 family.

The protein localises to the cell membrane. Its function is as follows. Odorant receptor. This Mus musculus (Mouse) protein is Olfactory receptor 10N1.